Consider the following 119-residue polypeptide: Large ribosomal subunit protein uL14 (119 aa).

The protein belongs to the universal ribosomal protein uL14 family. As to quaternary structure, part of the 50S ribosomal subunit. Forms a cluster with proteins L3 and L19. In the 70S ribosome, L14 and L19 interact and together make contacts with the 16S rRNA in bridges B5 and B8.

Binds to 23S rRNA. Forms part of two intersubunit bridges in the 70S ribosome. This Neorickettsia sennetsu (strain ATCC VR-367 / Miyayama) (Ehrlichia sennetsu) protein is Large ribosomal subunit protein uL14.